Here is a 722-residue protein sequence, read N- to C-terminus: Zinc finger BED domain-containing protein RICESLEEPER 1 (722 aa).

The segment at 66–126 adopts a BED-type zinc-finger fold; that stretch reads RKKSLVWEHF…GSCPKIKNQE (61 aa). Positions 89, 92, 113, and 119 each coordinate Zn(2+). Residues 572–592 form a disordered region; the sequence is VEQGGGNNAPASENSTQATAP. Polar residues predominate over residues 580-592; the sequence is APASENSTQATAP. The HATC (Hobo-Ac-Tam3) domain stretch occupies residues 617 to 702; sequence ELEQYLDESL…EALVCAKDWL (86 aa).

As to quaternary structure, homodimer.

Its subcellular location is the nucleus. Transposase-like protein that is essential for plant growth and development. May regulate global gene expression by recruiting other cellular factors. In Oryza sativa subsp. japonica (Rice), this protein is Zinc finger BED domain-containing protein RICESLEEPER 1.